We begin with the raw amino-acid sequence, 355 residues long: Putative transport protein PH1000 (355 aa).

Helical transmembrane passes span 34–54, 55–75, 84–104, 158–178, 212–232, 240–260, 274–294, and 310–330; these read VTWI…LPFF, SPLF…IKLK, AILL…ILVY, FSVP…YFFL, VWLL…LIFK, ILAG…GWMI, IIAG…LPDF, and VLVL…GLII.

It belongs to the autoinducer-2 exporter (AI-2E) (TC 2.A.86) family.

It localises to the cell membrane. The protein is Putative transport protein PH1000 of Pyrococcus horikoshii (strain ATCC 700860 / DSM 12428 / JCM 9974 / NBRC 100139 / OT-3).